The sequence spans 400 residues: MSERVILAYSGGLDTSVAISWIGKETGKEVVAVAIDLGQGGEDMEVVRQRAIDCGAVEAVVVDARDEFAEQYCLPAIQSNALYMDRYPLVSALSRPLIVKHLVDAAREHGGGIVAHGCTGKGNDQVRFEVGFASLAPDLKVLAPVRDYAWTREKAIAFAEENAIPINVTKRSPFSIDQNVWGRAVETGFLEHLWNAPTKDVYDYTEDPTVNWSSPDEVVVGFEKGVPVSIDGNPVTVLQAIEQLNERAGAQGVGRLDVVEDRLVGIKSREIYEAPGAMVLITAHTELEHVTLERELGRYKRLTDQKWGELVYDGLWFSPLKSALESFVANTQEHVSGEIRLVLHGGHIAVNGRRSSESLYDFNLATYDEGDTFDQSSAKGFVHVHGLSSSLSARRDLAGK.

8–16 provides a ligand contact to ATP; sequence AYSGGLDTS. Tyr-87 provides a ligand contact to L-citrulline. ATP is bound at residue Gly-117. 3 residues coordinate L-aspartate: Thr-119, Asn-123, and Asp-124. Asn-123 provides a ligand contact to L-citrulline. Arg-127, Ser-175, Glu-260, and Tyr-272 together coordinate L-citrulline.

The protein belongs to the argininosuccinate synthase family. Type 1 subfamily. As to quaternary structure, homotetramer.

The protein localises to the cytoplasm. The enzyme catalyses L-citrulline + L-aspartate + ATP = 2-(N(omega)-L-arginino)succinate + AMP + diphosphate + H(+). It functions in the pathway amino-acid biosynthesis; L-arginine biosynthesis; L-arginine from L-ornithine and carbamoyl phosphate: step 2/3. The sequence is that of Argininosuccinate synthase from Mycolicibacterium gilvum (strain PYR-GCK) (Mycobacterium gilvum (strain PYR-GCK)).